Reading from the N-terminus, the 403-residue chain is MSEKGRLFTSESVTEGHPDKICDAVSDSVLDALLAADPRSRVAVETLVTTGQVHVVGEVTTTAKEAFADITNIVRERILDIGYDSSDKGFDGASCGVNIGIGAQSPDIAQGVDTAHEARVEGAADPLDAQGAGDQGLMFGYAINDTPELMPLPIALAHRLSRRLTEVRKNGVLPYLRPDGKTQVTIAYEDRVPVRLDTVVISTQHADDIDLVKTLDPDIREQVLKTVLDDLAHDTLDASAVRVLVNPTGKFVLGGPMGDAGLTGRKIIVDTYGGWARHGGGAFSGKDPSKVDRSAAYAMRWVAKNVVAAGLAEGVEVQVAYAIGKAAPVGLFVETFGSEAVDPVKIEKAIGEVFDLRPGAIIRDLNLLRPIYAPTAAYGHFGRTDVDLPWERLDKVDDLKRAI.

An ATP-binding site is contributed by histidine 17. Aspartate 19 is a Mg(2+) binding site. Glutamate 45 is a K(+) binding site. L-methionine is bound by residues glutamate 58 and glutamine 104. The segment at 104-114 (QSPDIAQGVDT) is flexible loop. ATP-binding positions include 179–181 (DGK), 250–251 (KF), aspartate 259, 265–266 (RK), alanine 282, and lysine 286. Residue aspartate 259 participates in L-methionine binding. Lysine 290 provides a ligand contact to L-methionine.

It belongs to the AdoMet synthase family. As to quaternary structure, homotetramer; dimer of dimers. Mg(2+) is required as a cofactor. Requires K(+) as cofactor.

It is found in the cytoplasm. It catalyses the reaction L-methionine + ATP + H2O = S-adenosyl-L-methionine + phosphate + diphosphate. The protein operates within amino-acid biosynthesis; S-adenosyl-L-methionine biosynthesis; S-adenosyl-L-methionine from L-methionine: step 1/1. Catalyzes the formation of S-adenosylmethionine (AdoMet) from methionine and ATP. The overall synthetic reaction is composed of two sequential steps, AdoMet formation and the subsequent tripolyphosphate hydrolysis which occurs prior to release of AdoMet from the enzyme. The polypeptide is S-adenosylmethionine synthase (Mycobacterium ulcerans (strain Agy99)).